We begin with the raw amino-acid sequence, 566 residues long: MPNPKPLPPQSELDNIRRYNAQAIANYYRRRPWKVLWRALEVVWSFGFFLTCLLWDQWTGQVEYYKRQRAEDLRELLTKLGPTFIKVGQALSTRPDLVRRDFLEELIKLQDQLPPFDNDLAFQLMEEQLGMKVDEAYREISAHPVAAASLGQVYRAMLFSGEEVAVKVQRPNLRPRLSLDLYLMRLGAQKFGRFLPLNLGHDLTLIVDEFGIKLFEEIDYLNEGRNAEKFAENFHGDAEVKVPCIYWQYSNQKVLTLEWIQGFKLTDTDKIRAAGLDPSDIIRIGVTSGLRQLLEHGFFHADPHPGNLFATLDGRMAYIDFGMMDQLEPGTKETIASSIVQLINKDYLALTEDFIALGFLAPNTDITPIIPALENVFGSAIGQSVQDFNFKTITDDFSELMYDYPFRVPAKFALIIRSLVTQEGLALSLDPNFKIVEVAYPYVARRLLTGESPQLRRQLIDVLFKNGKFQWQRLENMLSIARSDTKFDLLPTAQLGLQFLFSEEGLYLRRQILLALTEDDRLHTDEVQRIWGLVKDDFKPQELVNVAWNAVREFSLAGVSTILPQR.

Belongs to the protein kinase superfamily. ADCK protein kinase family.

This is an uncharacterized protein from Synechocystis sp. (strain ATCC 27184 / PCC 6803 / Kazusa).